Consider the following 150-residue polypeptide: SsrA-binding protein (150 aa).

This sequence belongs to the SmpB family.

The protein resides in the cytoplasm. Its function is as follows. Required for rescue of stalled ribosomes mediated by trans-translation. Binds to transfer-messenger RNA (tmRNA), required for stable association of tmRNA with ribosomes. tmRNA and SmpB together mimic tRNA shape, replacing the anticodon stem-loop with SmpB. tmRNA is encoded by the ssrA gene; the 2 termini fold to resemble tRNA(Ala) and it encodes a 'tag peptide', a short internal open reading frame. During trans-translation Ala-aminoacylated tmRNA acts like a tRNA, entering the A-site of stalled ribosomes, displacing the stalled mRNA. The ribosome then switches to translate the ORF on the tmRNA; the nascent peptide is terminated with the 'tag peptide' encoded by the tmRNA and targeted for degradation. The ribosome is freed to recommence translation, which seems to be the essential function of trans-translation. In Coprothermobacter proteolyticus (strain ATCC 35245 / DSM 5265 / OCM 4 / BT), this protein is SsrA-binding protein.